The chain runs to 733 residues: LMBR1 domain-containing protein 2 homolog A (733 aa).

A run of 5 helical transmembrane segments spans residues 1–21 (MIVIFIFILIAVGLLSTKILH), 33–53 (VYISVWIGWFMCFSIVILVPI), 125–145 (FYFGTLLLTWLVYPLMGSFVL), 163–183 (AYLYLIFGVIGLVVMIWLLAV), and 191–211 (MVGFAMAAANTWGLCLVIILM). Residues 232–266 (LKHLQFKAVELLNSKKKANEELIATMKVIRRIQEK) adopt a coiled-coil conformation. 4 helical membrane passes run 386–406 (AAIVFAVLSLLIIWSEFALAF), 423–443 (VSNIFVQFILFFPLGYEALTC), 468–488 (SIIFSAAYLCRLGAPLCYNFI), and 513–533 (VAPFLGTYFYIYFPLLIVIVC). Disordered regions lie at residues 581–641 (NNIK…TSSA), 649–668 (LKKSSNNNNNNNNNNNPYEQ), and 674–696 (ESNDFDDDDDIESGGAGRPTYNA). The segment covering 596–619 (DSTSNNPKQIFKSGSTTISKQSPP) has biased composition (polar residues). Low complexity-rich tracts occupy residues 620-640 (NLNVSGGNINNNNTNNGNTSS) and 654-664 (NNNNNNNNNNN). Residues 674-685 (ESNDFDDDDDIE) show a composition bias toward acidic residues.

It belongs to the LIMR family.

The protein resides in the membrane. The chain is LMBR1 domain-containing protein 2 homolog A from Dictyostelium discoideum (Social amoeba).